Here is a 687-residue protein sequence, read N- to C-terminus: MQKSLVSLAWVFVAILGAICLGVLALHKGESINTLWLVVASACIYSIGYRFYSHFIAYKVLKLDDSRATPACVRNDGKDFVPTDKAITFGHHFAAIAGAGPLVGPILAAQMGYLPSILWILIGSVLGGCVHDFVVLFASIRRDGKSLGEMIKLEMGQFVGMIASLGILGIMLIIIAILAMVVVKALAHSPWGFFTIAMTIPIAILMGLYMRFFRPHKILEVSVIGFILLIIAIYAGKYVSLDPKLASIFTFEASSLAWMIMGYGFVASILPVWFLLAPRDYLSTFLKIGVIGVLVVAIIFVAPPLQIPKITPFVDGSGPVFAGSVFPFLFITVACGTISGFHALISSGTTPKMLAKESDARLVGYGSMVMESVVALMALVCAGILHPGLYFAINSPEVSIGKDIADAASVISSWGFNISAEEIREMTKNIGESSILSRTGGAPTFAIGLAMIVYHILGDPSVMAFWYHFAILFEALFILTAVDAGTRTARFMIQDLLGNVYKPLGDLSSYKAGIFATLLCVAGWGYFLYQGTIDPKGGIYTLWPLFGVSNQMLAGMALLLVTVVLFKMGRFKGAMISALPAVLILSITFYSGILKVVPKSDNSVLNNVSHVAQMQIIKEKMATTTDEKALKTLQKSFFNHAIDAILCVFFMLVALLVLIVSVRICSNAYFKNKIYPPLAETPYIKAS.

The next 17 helical transmembrane spans lie at 6–26 (VSLA…VLAL), 29–49 (GESI…SIGY), 87–107 (ITFG…GPIL), 117–137 (ILWI…VVLF), 162–182 (IASL…AMVV), 190–210 (PWGF…GLYM), 221–241 (VSVI…YVSL), 256–276 (LAWM…WFLL), 285–305 (FLKI…APPL), 325–345 (VFPF…HALI), 373–393 (VVAL…YFAI), 440–460 (GGAP…LGDP), 462–482 (VMAF…LTAV), 513–533 (GIFA…QGTI), 546–566 (FGVS…VVLF), 574–594 (AMIS…SGIL), and 642–662 (IDAI…IVSV).

Belongs to the peptide transporter carbon starvation (CstA) (TC 2.A.114) family.

It localises to the cell inner membrane. Involved in peptide utilization. The polypeptide is Peptide transporter CstA (cstA) (Helicobacter pylori (strain ATCC 700392 / 26695) (Campylobacter pylori)).